Here is a 287-residue protein sequence, read N- to C-terminus: Myoblast determination protein 1 homolog B (287 aa).

Residues 96–147 (DRRRAATMRERRRLSKVNDAFETLKRCTSTNPNQRLPKVDILRNAISYIDSL) enclose the bHLH domain. 2 disordered regions span residues 161-202 (NMEH…FYTD) and 231-277 (QSPS…QLSH). A compositionally biased stretch (low complexity) spans 168–188 (DSDASSPSSNCSDGMNSPPCS). Polar residues predominate over residues 267-277 (SPGNSCTQLSH).

In terms of assembly, efficient DNA binding requires dimerization with another bHLH protein.

Its subcellular location is the nucleus. Functionally, may act as a transcriptional activator that promotes transcription of muscle-specific target genes and plays a role in muscle differentiation. In Xenopus laevis (African clawed frog), this protein is Myoblast determination protein 1 homolog B (myod1-b).